The following is a 1355-amino-acid chain: Probable aldehyde oxidase 2 (1355 aa).

One can recognise a 2Fe-2S ferredoxin-type domain in the interval 9–96 (RPVVVTVNGE…HCAVTTSEGI (88 aa)). Positions 48, 53, 56, and 78 each coordinate [2Fe-2S] cluster. Residues 244–422 (VAVTGDGWFH…VSISIPDWGS (179 aa)) form the FAD-binding PCMH-type domain. A disordered region spans residues 544-577 (PENANVPNGSCTNGTANGSANSSPEKHSNVDSSD). Polar residues predominate over residues 548–566 (NVPNGSCTNGTANGSANSS).

Belongs to the xanthine dehydrogenase family. Aldehyde oxidases (AO) are homodimers and heterodimers of AO subunits. The cofactor is [2Fe-2S] cluster. It depends on FAD as a cofactor. Mo-molybdopterin is required as a cofactor.

The enzyme catalyses an aldehyde + O2 + H2O = a carboxylate + H2O2 + H(+). The protein is Probable aldehyde oxidase 2 of Oryza sativa subsp. japonica (Rice).